We begin with the raw amino-acid sequence, 591 residues long: L-fucose isomerase (591 aa).

Active-site proton acceptor residues include Glu337 and Asp361. Mn(2+) is bound by residues Glu337, Asp361, and His528.

The protein belongs to the L-fucose isomerase family. In terms of assembly, homohexamer. It depends on Mn(2+) as a cofactor.

It is found in the cytoplasm. It carries out the reaction L-fucose = L-fuculose. The protein operates within carbohydrate degradation; L-fucose degradation; L-lactaldehyde and glycerone phosphate from L-fucose: step 1/3. Converts the aldose L-fucose into the corresponding ketose L-fuculose. This Salmonella choleraesuis (strain SC-B67) protein is L-fucose isomerase.